Consider the following 160-residue polypeptide: Sperm protein associated with the nucleus on the X chromosome N2 (160 aa).

2 disordered regions span residues 1 to 48 (MEKP…TSEY) and 64 to 160 (SNQL…GEED). The segment covering 10–35 (GEKRKSPCDSNNRNDEMQETPNRDLA) has biased composition (basic and acidic residues). Polar residues predominate over residues 64–79 (SNQLENDQSQENSVNP). Residues 81–97 (QEEEDEGSSQEDEDLDS) show a composition bias toward acidic residues. The segment covering 136 to 148 (SSERSSQEEKDPD) has biased composition (basic and acidic residues).

The protein belongs to the SPAN-X family.

This Pongo pygmaeus (Bornean orangutan) protein is Sperm protein associated with the nucleus on the X chromosome N2 (SPANXN2).